The following is a 323-amino-acid chain: Acetylglutamate kinase (323 aa).

Residues 90 to 91, R112, and N218 each bind substrate; that span reads GG.

Belongs to the acetylglutamate kinase family. ArgB subfamily.

It localises to the cytoplasm. It carries out the reaction N-acetyl-L-glutamate + ATP = N-acetyl-L-glutamyl 5-phosphate + ADP. Its pathway is amino-acid biosynthesis; L-arginine biosynthesis; N(2)-acetyl-L-ornithine from L-glutamate: step 2/4. Its function is as follows. Catalyzes the ATP-dependent phosphorylation of N-acetyl-L-glutamate. This chain is Acetylglutamate kinase, found in Ehrlichia canis (strain Jake).